The sequence spans 185 residues: Elongation factor P (185 aa).

Belongs to the elongation factor P family.

The protein resides in the cytoplasm. It participates in protein biosynthesis; polypeptide chain elongation. Its function is as follows. Involved in peptide bond synthesis. Stimulates efficient translation and peptide-bond synthesis on native or reconstituted 70S ribosomes in vitro. Probably functions indirectly by altering the affinity of the ribosome for aminoacyl-tRNA, thus increasing their reactivity as acceptors for peptidyl transferase. This chain is Elongation factor P, found in Bacillus anthracis (strain CDC 684 / NRRL 3495).